Reading from the N-terminus, the 344-residue chain is Dihydroorotate dehydrogenase (quinone) (344 aa).

FMN-binding positions include 61 to 65 (AGLDK) and T85. Position 65 (K65) interacts with substrate. A substrate-binding site is contributed by 110–114 (NRMGF). 2 residues coordinate FMN: N138 and N171. N171 is a substrate binding site. S174 serves as the catalytic Nucleophile. N176 is a substrate binding site. FMN-binding residues include K216 and T244. Position 245 to 246 (245 to 246 (NT)) interacts with substrate. FMN-binding positions include G267, G296, and 317–318 (YS).

The protein belongs to the dihydroorotate dehydrogenase family. Type 2 subfamily. Monomer. It depends on FMN as a cofactor.

The protein resides in the cell membrane. The catalysed reaction is (S)-dihydroorotate + a quinone = orotate + a quinol. The protein operates within pyrimidine metabolism; UMP biosynthesis via de novo pathway; orotate from (S)-dihydroorotate (quinone route): step 1/1. Catalyzes the conversion of dihydroorotate to orotate with quinone as electron acceptor. The chain is Dihydroorotate dehydrogenase (quinone) from Psychrobacter cryohalolentis (strain ATCC BAA-1226 / DSM 17306 / VKM B-2378 / K5).